A 247-amino-acid polypeptide reads, in one-letter code: ATP synthase subunit a, chloroplastic (247 aa).

5 consecutive transmembrane segments (helical) span residues 38–58 (QVLI…TVAV), 95–115 (VPFI…GALL), 134–154 (INTT…AGLT), 199–219 (LVVV…VMFL), and 220–240 (GLFT…AYIG).

The protein belongs to the ATPase A chain family. As to quaternary structure, F-type ATPases have 2 components, CF(1) - the catalytic core - and CF(0) - the membrane proton channel. CF(1) has five subunits: alpha(3), beta(3), gamma(1), delta(1), epsilon(1). CF(0) has four main subunits: a, b, b' and c.

The protein resides in the plastid. The protein localises to the chloroplast thylakoid membrane. Its function is as follows. Key component of the proton channel; it plays a direct role in the translocation of protons across the membrane. The polypeptide is ATP synthase subunit a, chloroplastic (Acorus calamus var. americanus (American sweet flag)).